A 342-amino-acid chain; its full sequence is tRNA N6-adenosine threonylcarbamoyltransferase (342 aa).

Positions 111 and 115 each coordinate Fe cation. Substrate contacts are provided by residues 133–137, D166, G179, D183, and N273; that span reads AVSGG. Position 301 (D301) interacts with Fe cation.

Belongs to the KAE1 / TsaD family. Requires Fe(2+) as cofactor.

Its subcellular location is the cytoplasm. It catalyses the reaction L-threonylcarbamoyladenylate + adenosine(37) in tRNA = N(6)-L-threonylcarbamoyladenosine(37) in tRNA + AMP + H(+). In terms of biological role, required for the formation of a threonylcarbamoyl group on adenosine at position 37 (t(6)A37) in tRNAs that read codons beginning with adenine. Is involved in the transfer of the threonylcarbamoyl moiety of threonylcarbamoyl-AMP (TC-AMP) to the N6 group of A37, together with TsaE and TsaB. TsaD likely plays a direct catalytic role in this reaction. The chain is tRNA N6-adenosine threonylcarbamoyltransferase from Syntrophotalea carbinolica (strain DSM 2380 / NBRC 103641 / GraBd1) (Pelobacter carbinolicus).